We begin with the raw amino-acid sequence, 873 residues long: Programmed cell death 6-interacting protein (873 aa).

Ala2 is subject to N-acetylalanine. The BRO1 domain occupies 3-397 (SFIWVQLKKT…AQMREATTLA (395 aa)). Positions 176–508 (TVDISPDTVG…KFRAVLDKAV (333 aa)) are interaction with CHMP4A, CHMP4B and CHMP4C. Position 215 is an N6-acetyllysine (Lys215). The interaction with SDCBP stretch occupies residues 423–873 (LTKSTAVVEQ…PPQQSYYPQQ (451 aa)). The residue at position 484 (Thr484) is a Phosphothreonine. The residue at position 486 (Ser486) is a Phosphoserine. The self-association stretch occupies residues 508–873 (VQADGQVKER…PPQQSYYPQQ (366 aa)). 2 disordered regions span residues 719 to 808 (AREP…GPPY) and 837 to 873 (PYPP…YPQQ). An interaction with TSG101 region spans residues 722–725 (PSAP). Ser735 carries the post-translational modification Phosphoserine. Phosphothreonine occurs at positions 742 and 745. A compositionally biased stretch (pro residues) spans 745–767 (TPAPRTMPPAKPQPPARPPPPVL). Position 749 is an omega-N-methylarginine (Arg749). Residues 768 to 791 (PANRVPPAAAATAPAGVGTASAAP) show a composition bias toward low complexity. 2 stretches are compositionally biased toward pro residues: residues 792–808 (PQTP…GPPY) and 849–865 (APYP…PQPP). An interaction with CEP55 region spans residues 802-811 (QAQGPPYPTY).

Self-associates. Interacts with SH3KBP1. Interacts with PDCD6 in a calcium-dependent manner. Interacts with TSG101 in a calcium-dependent manner; PDCD6IP homooligomerization may be required for TSG101-binding. Interacts with SGSM3. Directly interacts with CHMP4A, CHMP4B and CHMP4C. Directly interacts with CEP55 in a 1:2 stoechiometry; this interaction is required for PDCD6IP targeting to the midbody. May interact with PDGFRB. Interacts with SH3GL1 and SH3GL2/endophilin-1. Forms a complex with SDCBP and SDC2. Found in a complex with F-actin, TJP1/ZO-1 and PARD3. Interacts with CD2AP. Interacts with ARRDC1. Interacts (via BRO1 domain) with the ATG12-ATG3 conjugate; this interaction is bridged by ATG12 and promotes multiple PDCD6IP-mediated functions such as endolysosomal trafficking, macroautophagy and exosome biogenesis. May be phosphorylated on tyrosine residues by activated PDGFRB. As to expression, expressed in astrocytes and glioma cells.

The protein resides in the cytoplasm. It is found in the cytosol. Its subcellular location is the melanosome. The protein localises to the cytoskeleton. It localises to the microtubule organizing center. The protein resides in the centrosome. It is found in the secreted. Its subcellular location is the extracellular exosome. The protein localises to the cell junction. It localises to the tight junction. The protein resides in the midbody. It is found in the midbody ring. In terms of biological role, multifunctional protein involved in endocytosis, multivesicular body biogenesis, membrane repair, cytokinesis, apoptosis and maintenance of tight junction integrity. Class E VPS protein involved in concentration and sorting of cargo proteins of the multivesicular body (MVB) for incorporation into intralumenal vesicles (ILVs) that are generated by invagination and scission from the limiting membrane of the endosome. Binds to the phospholipid lysobisphosphatidic acid (LBPA) which is abundant in MVBs internal membranes. The MVB pathway requires the sequential function of ESCRT-O, -I,-II and -III complexes. The ESCRT machinery also functions in topologically equivalent membrane fission events, such as the terminal stages of cytokinesis. Adapter for a subset of ESCRT-III proteins, such as CHMP4, to function at distinct membranes. Required for completion of cytokinesis. May play a role in the regulation of both apoptosis and cell proliferation. Regulates exosome biogenesis in concert with SDC1/4 and SDCBP. By interacting with F-actin, PARD3 and TJP1 secures the proper assembly and positioning of actomyosin-tight junction complex at the apical sides of adjacent epithelial cells that defines a spatial membrane domain essential for the maintenance of epithelial cell polarity and barrier. The sequence is that of Programmed cell death 6-interacting protein from Rattus norvegicus (Rat).